The chain runs to 291 residues: HTH-type transcriptional regulator DgcR (291 aa).

The 58-residue stretch at 1–58 (MRLRHIEVFHAIYTTGSITNAAKALHVSQPSVSKVLSHAEMQLGFKLFERVKGRLIPT) folds into the HTH lysR-type domain. A DNA-binding region (H-T-H motif) is located at residues 18–37 (ITNAAKALHVSQPSVSKVLS).

It belongs to the LysR transcriptional regulatory family.

Its function is as follows. Transcriptional regulator that positively regulates the expression of the D-Glu gene cluster (DGC). The cluster includes dgcN and dgcA, which are involved in a deamination-independent D-glutamate degradation pathway, dgcR itself, dgcT, dgcP and dgcH. Acts by binding the consensus sequence upstream of dgcR, dgcT, dgcP and dgcH. The polypeptide is HTH-type transcriptional regulator DgcR (Pseudoalteromonas sp).